We begin with the raw amino-acid sequence, 666 residues long: Semaphorin-7A (666 aa).

The segment at 1 to 21 (MTPPPPGRAAPSAPRARVPGP) is disordered. An N-terminal signal peptide occupies residues 1-44 (MTPPPPGRAAPSAPRARVPGPPARLGLPLRLRLLLLLWAAAASA). Over residues 9 to 21 (AAPSAPRARVPGP) the composition is skewed to low complexity. The region spanning 53-490 (RIFAVWKGHV…SQWEVSQVPL (438 aa)) is the Sema domain. Asn-105 is a glycosylation site (N-linked (GlcNAc...) asparagine). Cys-120 and Cys-126 are oxidised to a cystine. The residue at position 135 (Arg-135) is an Asymmetric dimethylarginine. Cys-143 and Cys-152 form a disulfide bridge. Residues Asn-157 and Asn-258 are each glycosylated (N-linked (GlcNAc...) asparagine). Cystine bridges form between Cys-266–Cys-366, Cys-291–Cys-335, Cys-493–Cys-511, Cys-500–Cys-541, Cys-503–Cys-518, Cys-566–Cys-613, and Cys-587–Cys-596. An interaction with integrins region spans residues 267 to 269 (RGD). The short motif at 267 to 269 (RGD) is the Cell attachment site element. Asn-330 carries N-linked (GlcNAc...) asparagine glycosylation. The Ig-like C2-type domain maps to 544–629 (PKPDKAPLQK…YFREAQHWQL (86 aa)). Residue Asn-602 is glycosylated (N-linked (GlcNAc...) asparagine). Ala-648 carries GPI-anchor amidated alanine lipidation. Residues 649 to 666 (ASLWLGVLPTLTLGLLVH) constitute a propeptide, removed in mature form.

It belongs to the semaphorin family. As to quaternary structure, interacts with ITGA1 and ITGB1. Interacts with PLXNC1. Detected in skin keratinocytes and on endothelial cells from skin blood vessels (at protein level). Expressed in fibroblasts, keratinocytes, melanocytes, placenta, testis, ovary, spleen, brain, spinal cord, lung, heart, adrenal gland, lymph nodes, thymus, intestine and kidney.

Its subcellular location is the cell membrane. Its function is as follows. Plays an important role in integrin-mediated signaling and functions both in regulating cell migration and immune responses. Promotes formation of focal adhesion complexes, activation of the protein kinase PTK2/FAK1 and subsequent phosphorylation of MAPK1 and MAPK3. Promotes production of pro-inflammatory cytokines by monocytes and macrophages. Plays an important role in modulating inflammation and T-cell-mediated immune responses. Promotes axon growth in the embryonic olfactory bulb. Promotes attachment, spreading and dendrite outgrowth in melanocytes. This chain is Semaphorin-7A (SEMA7A), found in Homo sapiens (Human).